Consider the following 273-residue polypeptide: Shikimate dehydrogenase (NADP(+)) (273 aa).

Residues 14–16 (SKS) and Thr61 each bind shikimate. Lys65 acts as the Proton acceptor in catalysis. Residue Glu77 participates in NADP(+) binding. The shikimate site is built by Asn86 and Asp102. NADP(+) contacts are provided by residues 126–130 (GAGGA), 150–155 (NRTYEK), and Met213. Tyr215 provides a ligand contact to shikimate. An NADP(+)-binding site is contributed by Gly237.

The protein belongs to the shikimate dehydrogenase family. In terms of assembly, homodimer.

It catalyses the reaction shikimate + NADP(+) = 3-dehydroshikimate + NADPH + H(+). It participates in metabolic intermediate biosynthesis; chorismate biosynthesis; chorismate from D-erythrose 4-phosphate and phosphoenolpyruvate: step 4/7. In terms of biological role, involved in the biosynthesis of the chorismate, which leads to the biosynthesis of aromatic amino acids. Catalyzes the reversible NADPH linked reduction of 3-dehydroshikimate (DHSA) to yield shikimate (SA). The chain is Shikimate dehydrogenase (NADP(+)) from Aliivibrio fischeri (strain MJ11) (Vibrio fischeri).